We begin with the raw amino-acid sequence, 107 residues long: MHCDIYKFLKHDDMYIYIARPDYPNDTDEIKDWLGVLPKDFRAGLGRSKFVMHLDLATTPALARVDKEEVLAKLASQGYFVQLPPQDVMRRQAELHARESQDSIYNT.

Residues 1 to 95 (MHCDIYKFLK…QDVMRRQAEL (95 aa)) form the YcgL domain.

This is YcgL domain-containing protein Psyc_0800 from Psychrobacter arcticus (strain DSM 17307 / VKM B-2377 / 273-4).